The following is a 39-amino-acid chain: uncharacterized protein (39 aa).

The protein belongs to the asfivirus C84L family.

This is an uncharacterized protein from African swine fever virus (isolate Warthog/Namibia/Wart80/1980) (ASFV).